The chain runs to 365 residues: WAT1-related protein At4g01440 (365 aa).

10 consecutive transmembrane segments (helical) span residues tryptophan 8–valine 28, valine 40–tryptophan 60, isoleucine 72–leucine 92, threonine 101–phenylalanine 121, alanine 132–methionine 152, tryptophan 181–isoleucine 201, tyrosine 213–isoleucine 233, isoleucine 249–tryptophan 269, isoleucine 277–isoleucine 297, and isoleucine 302–leucine 322. 2 EamA domains span residues asparagine 25 to isoleucine 144 and glycine 196 to leucine 321.

The protein belongs to the drug/metabolite transporter (DMT) superfamily. Plant drug/metabolite exporter (P-DME) (TC 2.A.7.4) family.

The protein resides in the membrane. The protein is WAT1-related protein At4g01440 of Arabidopsis thaliana (Mouse-ear cress).